The primary structure comprises 376 residues: N-acetyldiaminopimelate deacetylase (376 aa).

The active site involves aspartate 69. Catalysis depends on glutamate 128, which acts as the Proton acceptor.

The protein belongs to the peptidase M20A family. N-acetyldiaminopimelate deacetylase subfamily.

The catalysed reaction is N-acetyl-(2S,6S)-2,6-diaminopimelate + H2O = (2S,6S)-2,6-diaminopimelate + acetate. Its pathway is amino-acid biosynthesis; L-lysine biosynthesis via DAP pathway; LL-2,6-diaminopimelate from (S)-tetrahydrodipicolinate (acetylase route): step 3/3. Functionally, catalyzes the conversion of N-acetyl-diaminopimelate to diaminopimelate and acetate. The chain is N-acetyldiaminopimelate deacetylase from Bacillus cereus (strain ATCC 14579 / DSM 31 / CCUG 7414 / JCM 2152 / NBRC 15305 / NCIMB 9373 / NCTC 2599 / NRRL B-3711).